Reading from the N-terminus, the 805-residue chain is Shutoff protein (805 aa).

Residues 1 to 88 (MESVEKEDSL…QVGRGDQRHG (88 aa)) form a disordered region. Residues 18 to 29 (TTASTDAANAPT) are compositionally biased toward polar residues. Composition is skewed to basic and acidic residues over residues 59–70 (RSVPTEDKKQDQ) and 79–88 (QVGRGDQRHG). The tract at residues 280–345 (VMSELIVRRA…AVLVTVELEC (66 aa)) is binding to host EIF4G. The 119-residue stretch at 348-466 (RFFADPEMQR…DLWTAFNERS (119 aa)) folds into the RRM domain. Residues tyrosine 365 and tyrosine 682 each carry the phosphotyrosine; by host modification. Positions 684-805 (DPQSGEELNP…AGTACSPTQP (122 aa)) are disordered. The span at 726 to 742 (GRGGILGQSGRGGFGRG) shows a compositional bias: gly residues. Residues 754 to 763 (RSFRGRRGVR) show a composition bias toward basic residues.

Belongs to the adenoviridae shutoff protein family. Monomer. Interacts with hexon protein; this interaction allows chaperoning and trimerization of hexon proteins. Interacts (via N-terminus) with host initiation factor EIF4G (via C-terminus). Interacts (via RRM domain) with viral mRNAs that contain the tripartite leader; this interaction allows ribosome shunting and expression of viral late mRNAs. In terms of processing, might be cleaved by the viral protease. Phosphorylated. Tyrosine phosphorylation enhances preferential binding to tripartite leader mRNAs and allows ribosome shunting. Post-translationally, methylated. Asymmetric dimethylation by host PRMT1 of the Arg/Gly-rich region may regulate shutoff protein binding to hexon and promote the capsid assembly in the nucleus.

It localises to the host cytoplasm. Its function is as follows. Protein that inhibits host translation while promoting late viral translation by ribosome shunting. Blocks host cap-dependent translation by binding to eIF4G, displacing MKNK1 from cap initiation complexes and preventing EIF4E phosphorylation. Binds to the tripartite leader sequence of viral late mRNAs and recruits host eIF4G, PABPC1/poly-A binding protein and 40S ribosomes subunits on viral mRNAs, allowing ribosome shunting and efficient translation of late viral mRNAs even though conventional translation via ribosome scanning from the cap has been shut off in the host cell. During assembly, acts as a chaperone protein that helps hexon proteins assembly into trimers. This is Shutoff protein from Homo sapiens (Human).